Consider the following 123-residue polypeptide: Plasminogen (123 aa).

Positions 40-118 (DCYHGNGQSY…RWEFCNLKKC (79 aa)) constitute a Kringle domain. Cystine bridges form between Cys-41/Cys-118, Cys-62/Cys-101, and Cys-90/Cys-113.

This sequence belongs to the peptidase S1 family. Plasminogen subfamily. In terms of assembly, interacts with CSPG4 and AMOT. Interacts (via the Kringle domains) with HRG; the interaction tethers PLG to the cell surface and enhances its activation. Interacts (via Kringle 4 domain) with ADA; the interaction stimulates PLG activation when in complex with DPP4. Angiostatin: Interacts with ATP5F1A; the interaction inhibits most of the angiogenic effects of angiostatin.

Its subcellular location is the secreted. It carries out the reaction Preferential cleavage: Lys-|-Xaa &gt; Arg-|-Xaa, higher selectivity than trypsin. Converts fibrin into soluble products.. With respect to regulation, converted into plasmin by plasminogen activators, both plasminogen and its activator being bound to fibrin. Cannot be activated with streptokinase. Plasmin dissolves the fibrin of blood clots and acts as a proteolytic factor in a variety of other processes including embryonic development, tissue remodeling, tumor invasion, and inflammation. In ovulation, weakens the walls of the Graafian follicle. It activates the urokinase-type plasminogen activator, collagenases and several complement zymogens, such as C1, C4 and C5. Cleavage of fibronectin and laminin leads to cell detachment and apoptosis. Also cleaves fibrin, thrombospondin and von Willebrand factor. Its role in tissue remodeling and tumor invasion may be modulated by CSPG4. Binds to cells. This is Plasminogen (PLG) from Capra hircus (Goat).